We begin with the raw amino-acid sequence, 395 residues long: Elongation factor Tu (395 aa).

In terms of domain architecture, tr-type G spans 10–204 (KPHVNIGTIG…AIDNWIPLPQ (195 aa)). A G1 region spans residues 19 to 26 (GHVDHGKT). GTP is bound at residue 19 to 26 (GHVDHGKT). Threonine 26 contacts Mg(2+). Residues 60–64 (GITIN) form a G2 region. The segment at 81–84 (DCPG) is G3. GTP is bound by residues 81 to 85 (DCPGH) and 136 to 139 (NKVD). The interval 136–139 (NKVD) is G4. The tract at residues 174–176 (SAL) is G5.

The protein belongs to the TRAFAC class translation factor GTPase superfamily. Classic translation factor GTPase family. EF-Tu/EF-1A subfamily. In terms of assembly, monomer.

It is found in the cytoplasm. The enzyme catalyses GTP + H2O = GDP + phosphate + H(+). In terms of biological role, GTP hydrolase that promotes the GTP-dependent binding of aminoacyl-tRNA to the A-site of ribosomes during protein biosynthesis. The polypeptide is Elongation factor Tu (Azobacteroides pseudotrichonymphae genomovar. CFP2).